The chain runs to 437 residues: GTPase Obg (437 aa).

The region spanning 2–160 (SMFLDTAKIS…RQLELELKIL (159 aa)) is the Obg domain. In terms of domain architecture, OBG-type G spans 161 to 338 (ADVGLVGFPS…LLEATAELLA (178 aa)). Residues 167-174 (GFPSVGKS), 192-196 (FTTIV), 214-217 (DLPG), 284-287 (NKMD), and 319-321 (SSL) contribute to the GTP site. 2 residues coordinate Mg(2+): Ser-174 and Thr-194. In terms of domain architecture, OCT spans 359 to 437 (GFAETEKDFE…IGKFEFEFVD (79 aa)).

Belongs to the TRAFAC class OBG-HflX-like GTPase superfamily. OBG GTPase family. As to quaternary structure, monomer. Mg(2+) serves as cofactor.

Its subcellular location is the cytoplasm. An essential GTPase which binds GTP, GDP and possibly (p)ppGpp with moderate affinity, with high nucleotide exchange rates and a fairly low GTP hydrolysis rate. Plays a role in control of the cell cycle, stress response, ribosome biogenesis and in those bacteria that undergo differentiation, in morphogenesis control. This Streptococcus pyogenes serotype M4 (strain MGAS10750) protein is GTPase Obg.